We begin with the raw amino-acid sequence, 145 residues long: Ribosomal protein uL24-like (145 aa).

Disordered regions lie at residues 1–21 (MKFN…HFNA) and 122–145 (KAKS…KMQE). Residues lysine 136 and lysine 142 each participate in a glycyl lysine isopeptide (Lys-Gly) (interchain with G-Cter in SUMO2) cross-link.

Belongs to the universal ribosomal protein uL24 family.

The polypeptide is Ribosomal protein uL24-like (RPL26L1) (Homo sapiens (Human)).